The following is a 115-amino-acid chain: SOSS complex subunit C homolog (115 aa).

This sequence belongs to the SOSS-C family.

This is SOSS complex subunit C homolog from Drosophila grimshawi (Hawaiian fruit fly).